The chain runs to 415 residues: F-box protein ETP1 (415 aa).

An F-box domain is found at 1 to 46; sequence MTIPDLCNDLVDEILCRVPARNLKRLRSTSKRWNRLFKDDRRFARE.

Interacts with EIN2 (via C-terminus).

Functionally, negative regulator of EIN2 protein stability. In Arabidopsis thaliana (Mouse-ear cress), this protein is F-box protein ETP1.